Reading from the N-terminus, the 292-residue chain is Bifunctional protein FolD (292 aa).

NADP(+) is bound by residues 161-163 (GRS) and Ile231.

It belongs to the tetrahydrofolate dehydrogenase/cyclohydrolase family. As to quaternary structure, homodimer.

It carries out the reaction (6R)-5,10-methylene-5,6,7,8-tetrahydrofolate + NADP(+) = (6R)-5,10-methenyltetrahydrofolate + NADPH. The catalysed reaction is (6R)-5,10-methenyltetrahydrofolate + H2O = (6R)-10-formyltetrahydrofolate + H(+). It participates in one-carbon metabolism; tetrahydrofolate interconversion. Its function is as follows. Catalyzes the oxidation of 5,10-methylenetetrahydrofolate to 5,10-methenyltetrahydrofolate and then the hydrolysis of 5,10-methenyltetrahydrofolate to 10-formyltetrahydrofolate. The chain is Bifunctional protein FolD from Protochlamydia amoebophila (strain UWE25).